The chain runs to 405 residues: Accessory Sec system protein translocase subunit SecY2 (405 aa).

Transmembrane regions (helical) follow at residues 14–34, 65–85, 104–124, 131–151, 156–176, 191–211, 247–267, 285–305, 343–363, and 368–388; these read LFTSFLLFIYVLGSRIILPFV, IFSVGLSPWMSAMILWQMFSF, MYLTLLIAVIQSLAVSLRLPV, ILVVLMNTILLIAGTFFLVWL, ASMGIGGSIVILLSSMVLNIP, GIIVLLALLTLVFSYLLALMY, MYVMSFLSVPAYLFILLGFIF, PLWVYVYISVLFLFSIIFAFV, FSVIGGLFNVIMAGGPMLFVL, and LLRLAMIPGLFMMFGGMIFTI.

The protein belongs to the SecY/SEC61-alpha family. SecY2 subfamily. In terms of assembly, component of the accessory SecA2/SecY2 protein translocase complex required to export cell wall proteins. May form heterotrimers with SecE and SecG subunits.

The protein resides in the cell membrane. Its function is as follows. Part of the accessory SecA2/SecY2 system specifically required for export of possible cell wall proteins. The central subunit of a protein translocation channel. The sequence is that of Accessory Sec system protein translocase subunit SecY2 from Streptococcus pneumoniae serotype 4 (strain ATCC BAA-334 / TIGR4).